The chain runs to 201 residues: 3-isopropylmalate dehydratase small subunit (201 aa).

The protein belongs to the LeuD family. LeuD type 1 subfamily. In terms of assembly, heterodimer of LeuC and LeuD.

It carries out the reaction (2R,3S)-3-isopropylmalate = (2S)-2-isopropylmalate. It functions in the pathway amino-acid biosynthesis; L-leucine biosynthesis; L-leucine from 3-methyl-2-oxobutanoate: step 2/4. Functionally, catalyzes the isomerization between 2-isopropylmalate and 3-isopropylmalate, via the formation of 2-isopropylmaleate. The chain is 3-isopropylmalate dehydratase small subunit from Buchnera aphidicola subsp. Baizongia pistaciae (strain Bp).